Reading from the N-terminus, the 514-residue chain is 2-isopropylmalate synthase (514 aa).

In terms of domain architecture, Pyruvate carboxyltransferase spans isoleucine 4–lysine 266. 4 residues coordinate Mn(2+): aspartate 13, histidine 201, histidine 203, and asparagine 237. Residues glutamate 390–serine 514 form a regulatory domain region.

The protein belongs to the alpha-IPM synthase/homocitrate synthase family. LeuA type 1 subfamily. Homodimer. Requires Mn(2+) as cofactor.

It localises to the cytoplasm. It carries out the reaction 3-methyl-2-oxobutanoate + acetyl-CoA + H2O = (2S)-2-isopropylmalate + CoA + H(+). It participates in amino-acid biosynthesis; L-leucine biosynthesis; L-leucine from 3-methyl-2-oxobutanoate: step 1/4. Catalyzes the condensation of the acetyl group of acetyl-CoA with 3-methyl-2-oxobutanoate (2-ketoisovalerate) to form 3-carboxy-3-hydroxy-4-methylpentanoate (2-isopropylmalate). This is 2-isopropylmalate synthase from Shouchella clausii (strain KSM-K16) (Alkalihalobacillus clausii).